We begin with the raw amino-acid sequence, 204 residues long: tRNA (guanine-N(7)-)-methyltransferase (204 aa).

3 residues coordinate S-adenosyl-L-methionine: E36, E61, and D111. Residue D111 is part of the active site. Substrate is bound by residues K115, D147, and 177–180 (TRFE).

The protein belongs to the class I-like SAM-binding methyltransferase superfamily. TrmB family.

The catalysed reaction is guanosine(46) in tRNA + S-adenosyl-L-methionine = N(7)-methylguanosine(46) in tRNA + S-adenosyl-L-homocysteine. It functions in the pathway tRNA modification; N(7)-methylguanine-tRNA biosynthesis. Catalyzes the formation of N(7)-methylguanine at position 46 (m7G46) in tRNA. This chain is tRNA (guanine-N(7)-)-methyltransferase, found in Chlorobium phaeobacteroides (strain DSM 266 / SMG 266 / 2430).